The following is a 183-amino-acid chain: Large ribosomal subunit protein uL6 (183 aa).

This sequence belongs to the universal ribosomal protein uL6 family. As to quaternary structure, part of the 50S ribosomal subunit.

Its function is as follows. This protein binds to the 23S rRNA, and is important in its secondary structure. It is located near the subunit interface in the base of the L7/L12 stalk, and near the tRNA binding site of the peptidyltransferase center. In Chlamydia trachomatis serovar D (strain ATCC VR-885 / DSM 19411 / UW-3/Cx), this protein is Large ribosomal subunit protein uL6.